The chain runs to 739 residues: Copalyl diphosphate synthase 1 (739 aa).

Residue lysine 154 participates in substrate binding. Aspartate 287 and aspartate 289 together coordinate Mg(2+). Positions 287–290 (DADD) match the DXDD motif motif. Lysine 373 provides a ligand contact to substrate.

The protein belongs to the terpene synthase family. Mg(2+) is required as a cofactor.

The enzyme catalyses (2E,6E,10E)-geranylgeranyl diphosphate = (+)-copalyl diphosphate. It functions in the pathway secondary metabolite biosynthesis; terpenoid biosynthesis. In terms of biological role, monofunctional diterpene synthase converting geranylgeranyl diphosphate to copalyl diphosphate. This is Copalyl diphosphate synthase 1 (CPS1) from Selaginella moellendorffii (Spikemoss).